Consider the following 299-residue polypeptide: ATP phosphoribosyltransferase (299 aa).

It belongs to the ATP phosphoribosyltransferase family. Long subfamily. As to quaternary structure, equilibrium between an active dimeric form, an inactive hexameric form and higher aggregates. Interconversion between the various forms is largely reversible and is influenced by the natural substrates and inhibitors of the enzyme. It depends on Mg(2+) as a cofactor.

The protein resides in the cytoplasm. It carries out the reaction 1-(5-phospho-beta-D-ribosyl)-ATP + diphosphate = 5-phospho-alpha-D-ribose 1-diphosphate + ATP. The protein operates within amino-acid biosynthesis; L-histidine biosynthesis; L-histidine from 5-phospho-alpha-D-ribose 1-diphosphate: step 1/9. Its activity is regulated as follows. Feedback inhibited by histidine. In terms of biological role, catalyzes the condensation of ATP and 5-phosphoribose 1-diphosphate to form N'-(5'-phosphoribosyl)-ATP (PR-ATP). Has a crucial role in the pathway because the rate of histidine biosynthesis seems to be controlled primarily by regulation of HisG enzymatic activity. The protein is ATP phosphoribosyltransferase of Escherichia coli O81 (strain ED1a).